A 443-amino-acid polypeptide reads, in one-letter code: GTPase Der (443 aa).

EngA-type G domains lie at 3-168 (PLLA…PEAP) and 178-353 (VHLA…RNRS). GTP contacts are provided by residues 9–16 (GRPNVGKS), 56–60 (DTGGY), 120–123 (NKVE), 184–191 (GRPNVGKS), 231–235 (DTAGL), and 296–299 (NKWD). Positions 354–438 (QNVSTSQLNK…PISLRFLHKN (85 aa)) constitute a KH-like domain.

The protein belongs to the TRAFAC class TrmE-Era-EngA-EngB-Septin-like GTPase superfamily. EngA (Der) GTPase family. Associates with the 50S ribosomal subunit.

Its function is as follows. GTPase that plays an essential role in the late steps of ribosome biogenesis. The protein is GTPase Der of Chlorobium chlorochromatii (strain CaD3).